The following is a 401-amino-acid chain: tRNA(Met) cytidine acetate ligase (401 aa).

ATP is bound by residues 7-20 (VVEYNPFHNGHLYH), G101, N160, and 185-186 (RI).

Belongs to the TmcAL family.

It localises to the cytoplasm. The catalysed reaction is cytidine(34) in elongator tRNA(Met) + acetate + ATP = N(4)-acetylcytidine(34) in elongator tRNA(Met) + AMP + diphosphate. Catalyzes the formation of N(4)-acetylcytidine (ac(4)C) at the wobble position of elongator tRNA(Met), using acetate and ATP as substrates. First activates an acetate ion to form acetyladenylate (Ac-AMP) and then transfers the acetyl group to tRNA to form ac(4)C34. The polypeptide is tRNA(Met) cytidine acetate ligase (Anoxybacillus flavithermus (strain DSM 21510 / WK1)).